The chain runs to 1938 residues: MTDAQMADFGAARYLRKSEKERLEAQTRPFDIRTECFVPDDKEEYVKAKIVSREGGKVTAETENGKTVTVKEDQVMQQNPPKFDKIEDMAMLTFLHEPAVLYNLKERYAAWMIYTYSGLFCVTVNPYKWLPVYNAEVVAAYRGKKRSEAPPHIFSISDNAYQYMLTDRENQSILITGESGAGKTVNTKRVIQYFASIAAIGDRSKKDNPNANKGTLEDQIIQANPALEAFGNAKTVRNDNSSRFGKFIRIHFGATGKLASADIETYLLEKSRVIFQLKAERNYHIFYQILSNKKPELLDMLLVTNNPYDYAFVSQGEVSVASIDDSEELLATDSAFDVLGFTAEEKAGVYKLTGAIMHYGNMKFKQKQREEQAEPDGTEDADKSAYLMGLNSADLLKGLCHPRVKVGNEYVTKGQSVQQVYYSIGALAKSVYEKMFNWMVTRINATLETKQPRQYFIGVLDIAGFEIFDFNSFEQLCINFTNEKLQQFFNHHMFVLEQEEYKKEGIEWEFIDFGMDLQACIDLIEKPMGIMSILEEECMFPKATDMTFKAKLYDNHLGKSNNFQKPRNVKGKQEAHFSLVHYAGTVDYNILGWLEKNKDPLNETVVGLYQKSSLKLMATLFSTYASADTGDSGKGKGGKKKGSSFQTVSALHRENLNKLMTNLRTTHPHFVRCIIPNERKAPGVMDNPLVMHQLRCNGVLEGIRICRKGFPNRILYGDFRQRYRILNPAAIPEGQFIDSGKGAEKLLGSLDIDHNQYKFGHTKVFFKAGLLGLLEEMRDERLSRIITRIQAQARGQLMRIEFKKMVERRDALLVIQWNIRAFMGVKNWPWMKLYFKIKPLLKSAETEKEMANMKEEFGRVKDALEKSEARRKELEEKMVSLLQEKNDLQLQVQAEQDNLADAEERCDQLIKNKIQLEAKVKEMTERLEDEEEMNAELTAKKRKLEDECSELKKDIDDLELTLAKVEKEKHATENKVKNLTEEMAGLDEIIAKLTKEKKALQEAHQQALDDLQAEEDKVNTLTKSKVKLEQQVDDLEGSLEQEKKVRMDLERAKRKLEGDLKLTQESIMDLENDKLQLEEKLKKKEFDISQQNSKIEDEQALALQLQKKLKENQARIEELEEELEAERTARAKVEKLRSDLTRELEEISERLEEAGGATSVQIEMNKKREAEFQKMRRDLEEATLQHEATAAALRKKHADSVAELGEQIDNLQRVKQKLEKEKSEFKLELDDVTSHMEQIIKAKANLEKVSRTLEDQANEYRVKLEEAQRSLNDFTTQRAKLQTENGELARQLEEKEALIWQLTRGKLSYTQQMEDLKRQLEEEGKAKNALAHALQSARHDCDLLREQYEEEMEAKAELQRVLSKANSEVAQWRTKYETDAIQRTEELEEAKKKLAQRLQDAEEAVEAVNAKCSSLEKTKHRLQNEIEDLMVDVERSNAAAAALDKKQRNFDKILAEWKQKYEESQSELESSQKEARSLSTELFKLKNAYEESLEHLETFKRENKNLQEEISDLTEQLGEGGKNVHELEKIRKQLEVEKLELQSALEEAEASLEHEEGKILRAQLEFNQIKAEIERKLAEKDEEMEQAKRNHLRVVDSLQTSLDAETRSRNEALRVKKKMEGDLNEMEIQLSQANRIASEAQKHLKNAQAHLKDTQLQLDDAVRANDDLKENIAIVERRNTLLQAELEELRAVVEQTERSRKLAEQELIETSERVQLLHSQNTSLINQKKKMDADLSQLQTEVEEAVQECRNAEEKAKKAITDAAMMAEELKKEQDTSAHLERMKKNMEQTIKDLQHRLDEAEQIALKGGKKQLQKLEARVRELENELEAEQKRNAESVKGMRKSERRIKELTYQTEEDKKNLVRLQDLVDKLQLKVKAYKRQAEEAEEQANTNLSKFRKVQHELDEAEERADIAESQVNKLRAKSRDIGAKQKMHDEE.

Positions 31 to 80 constitute a Myosin N-terminal SH3-like domain; sequence DIRTECFVPDDKEEYVKAKIVSREGGKVTAETENGKTVTVKEDQVMQQNP. The region spanning 84–779 is the Myosin motor domain; the sequence is DKIEDMAMLT…LLGLLEEMRD (696 aa). Lys-128 is modified (N6,N6,N6-trimethyllysine). 177–184 contributes to the ATP binding site; that stretch reads GESGAGKT. Thr-378 is subject to Phosphothreonine. Position 416 is a phosphoserine (Ser-416). Actin-binding stretches follow at residues 656–678 and 758–772; these read LNKL…IPNE and KFGH…GLLG. The IQ domain maps to 782–811; the sequence is LSRIITRIQAQARGQLMRIEFKKMVERRDA. Calmodulin-binding stretches follow at residues 789-806 and 815-832; these read IQAQ…KKMV and IQWN…PWMK. A coiled-coil region spans residues 842–1938; the sequence is KSAETEKEMA…GAKQKMHDEE (1097 aa). Residues Ser-1089 and Ser-1138 each carry the phosphoserine modification. The residue at position 1260 (Tyr-1260) is a Phosphotyrosine. Ser-1270 carries the phosphoserine modification. 2 positions are modified to phosphothreonine: Thr-1276 and Thr-1283. Ser-1308 is modified (phosphoserine). Position 1309 is a phosphotyrosine (Tyr-1309). Phosphothreonine is present on Thr-1310. Ser-1511 carries the post-translational modification Phosphoserine. Phosphothreonine occurs at positions 1514 and 1680. Positions 1907–1938 are disordered; that stretch reads AEERADIAESQVNKLRAKSRDIGAKQKMHDEE. Basic and acidic residues predominate over residues 1924-1938; that stretch reads KSRDIGAKQKMHDEE.

This sequence belongs to the TRAFAC class myosin-kinesin ATPase superfamily. Myosin family. Muscle myosin is a hexameric protein that consists of 2 heavy chain subunits (MHC), 2 alkali light chain subunits (MLC) and 2 regulatory light chain subunits (MLC-2).

It is found in the cytoplasm. It localises to the myofibril. Its function is as follows. Muscle contraction. The chain is Myosin-6 (Myh6) from Rattus norvegicus (Rat).